Consider the following 438-residue polypeptide: Enolase (438 aa).

H159 and E168 together coordinate substrate. The active-site Proton donor is the E211. Residues D246, E297, and D322 each contribute to the Mg(2+) site. Substrate is bound by residues E297 and D322. Residue K347 is the Proton acceptor of the active site. Substrate contacts are provided by residues 374-377 (SHRS) and K398.

It belongs to the enolase family. As to quaternary structure, homodimer. Mg(2+) serves as cofactor.

It localises to the cytoplasm. The enzyme catalyses (2R)-2-phosphoglycerate = phosphoenolpyruvate + H2O. It functions in the pathway carbohydrate degradation; glycolysis; pyruvate from D-glyceraldehyde 3-phosphate: step 4/5. The sequence is that of Enolase (ENO) from Alternaria alternata (Alternaria rot fungus).